Reading from the N-terminus, the 554-residue chain is Hydroxylamine reductase (554 aa).

Residues cysteine 3, cysteine 6, cysteine 18, and cysteine 25 each contribute to the [2Fe-2S] cluster site. Hybrid [4Fe-2O-2S] cluster contacts are provided by histidine 252, glutamate 276, cysteine 320, cysteine 408, cysteine 436, cysteine 461, glutamate 495, and lysine 497. At cysteine 408 the chain carries Cysteine persulfide.

Belongs to the HCP family. Requires [2Fe-2S] cluster as cofactor. Hybrid [4Fe-2O-2S] cluster serves as cofactor.

Its subcellular location is the cytoplasm. The enzyme catalyses A + NH4(+) + H2O = hydroxylamine + AH2 + H(+). Catalyzes the reduction of hydroxylamine to form NH(3) and H(2)O. In Shewanella baltica (strain OS155 / ATCC BAA-1091), this protein is Hydroxylamine reductase.